The chain runs to 382 residues: Pyrimidine monooxygenase RutA (382 aa).

Residues 68 to 69, N134, E143, 159 to 160, and S209 contribute to the FMN site; these read IK and RY.

This sequence belongs to the NtaA/SnaA/DszA monooxygenase family. RutA subfamily.

It catalyses the reaction uracil + FMNH2 + NADH + O2 = (Z)-3-ureidoacrylate + FMN + NAD(+) + H2O + H(+). It carries out the reaction thymine + FMNH2 + NADH + O2 = (Z)-2-methylureidoacrylate + FMN + NAD(+) + H2O + H(+). In terms of biological role, catalyzes the pyrimidine ring opening between N-3 and C-4 by an unusual flavin hydroperoxide-catalyzed mechanism, adding oxygen atoms in the process to yield ureidoacrylate peracid, that immediately reacts with FMN forming ureidoacrylate and FMN-N(5)-oxide. The FMN-N(5)-oxide reacts spontaneously with NADH to produce FMN. Requires the flavin reductase RutF to regenerate FMN in vivo. In Escherichia coli O150:H5 (strain SE15), this protein is Pyrimidine monooxygenase RutA.